A 525-amino-acid polypeptide reads, in one-letter code: Plant UBX domain-containing protein 13 (525 aa).

The 43-residue stretch at 2–44 folds into the UBA-like domain; the sequence is ATPTQEAIDTFMTITGSSNAVAVRKLEEYRGNLNRAVNAYFTH. 3 disordered regions span residues 67–96, 150–172, and 194–328; these read RTTD…PPFV, DDDN…SAEN, and METG…EEHD. The segment covering 209–229 has biased composition (basic and acidic residues); it reads AEREVLRSEGWKASSSEREAS. A compositionally biased stretch (acidic residues) spans 254 to 274; that stretch reads SEDDDDDDDDDPDYVEEEEEP. Position 362 is a phosphoserine (S362). Residues 380 to 436 adopt a coiled-coil conformation; sequence LASLEADRVKAEARRLEEEAARVEAIEEAKRKEEEARRKVEEEQELERQLVSKEASL. Basic and acidic residues predominate over residues 408–430; sequence AKRKEEEARRKVEEEQELERQLV. The interval 408–446 is disordered; sequence AKRKEEEARRKVEEEQELERQLVSKEASLPQEPPAGEEN. Positions 443–521 constitute a UBX domain; the sequence is GEENAITLQV…GLTSKQEALF (79 aa).

This is Plant UBX domain-containing protein 13 from Arabidopsis thaliana (Mouse-ear cress).